The primary structure comprises 302 residues: Small ribosomal subunit biogenesis GTPase RsgA (302 aa).

Residues 75 to 233 enclose the CP-type G domain; that stretch reads KNELIRPAVS…IMDTPGFSSM (159 aa). GTP is bound by residues 124-127 and 175-183; these read NKKD and GPSGVGKSS. The Zn(2+) site is built by C257, C262, H264, and C270.

This sequence belongs to the TRAFAC class YlqF/YawG GTPase family. RsgA subfamily. In terms of assembly, monomer. Associates with 30S ribosomal subunit, binds 16S rRNA. Zn(2+) serves as cofactor.

It is found in the cytoplasm. In terms of biological role, one of several proteins that assist in the late maturation steps of the functional core of the 30S ribosomal subunit. Helps release RbfA from mature subunits. May play a role in the assembly of ribosomal proteins into the subunit. Circularly permuted GTPase that catalyzes slow GTP hydrolysis, GTPase activity is stimulated by the 30S ribosomal subunit. This is Small ribosomal subunit biogenesis GTPase RsgA from Agathobacter rectalis (strain ATCC 33656 / DSM 3377 / JCM 17463 / KCTC 5835 / VPI 0990) (Eubacterium rectale).